A 430-amino-acid polypeptide reads, in one-letter code: Serine carboxypeptidase-like 13 (430 aa).

A signal peptide spans 1–22 (MSLTLEFLLLLIVLILSHHAHS). Intrachain disulfides connect Cys81–Cys319, Cys240–Cys254, and Cys278–Cys285. Asn102 carries an N-linked (GlcNAc...) asparagine glycan. Residue Ser177 is part of the active site. N-linked (GlcNAc...) asparagine glycosylation is found at Asn299 and Asn323. Asp355 is an active-site residue. Asn371 carries N-linked (GlcNAc...) asparagine glycosylation. His408 is an active-site residue.

It belongs to the peptidase S10 family. In terms of tissue distribution, expression not detected.

Its subcellular location is the secreted. The enzyme catalyses 2 1-O-(trans-sinapoyl)-beta-D-glucose = 1,2-di-O-sinapoyl beta-D-glucose + D-glucose. Functionally, catalyzes the formation of 1,2-bis-O-sinapoyl beta-D-glucoside. This Arabidopsis thaliana (Mouse-ear cress) protein is Serine carboxypeptidase-like 13 (SCPL13).